The following is a 38-amino-acid chain: Potassium channel toxin alpha-KTx 3.2 (38 aa).

Cystine bridges form between cysteine 8-cysteine 28, cysteine 14-cysteine 33, and cysteine 18-cysteine 35.

It belongs to the short scorpion toxin superfamily. Potassium channel inhibitor family. Alpha-KTx 03 subfamily. As to expression, expressed by the venom gland.

It localises to the secreted. Potent inhibitor of the Shaker potassium channels and its mammalian homologs (Kv1.1/KCNA1, Kv1.3/KCNA3, Kv1.6/KCNA6) (Ki&lt;1 nM for all channels). Also blocks Kv1.2/KCNA2 (IC(50)=26.8 nM). It also shows a weak interaction with nicotinic acetylcholine receptors (nAChR), suggesting it may weakly inhibit it. This is Potassium channel toxin alpha-KTx 3.2 from Leiurus hebraeus (Hebrew deathstalker scorpion).